Here is a 338-residue protein sequence, read N- to C-terminus: Lipoate-protein ligase A (338 aa).

In terms of domain architecture, BPL/LPL catalytic spans 29–216 (PATQRVLFLW…AFFAHYGERV (188 aa)). ATP is bound by residues Arg71, 76 to 79 (GAVF), and Lys134. Lys134 serves as a coordination point for (R)-lipoate.

It belongs to the LplA family. In terms of assembly, monomer.

It is found in the cytoplasm. It carries out the reaction L-lysyl-[lipoyl-carrier protein] + (R)-lipoate + ATP = N(6)-[(R)-lipoyl]-L-lysyl-[lipoyl-carrier protein] + AMP + diphosphate + H(+). The protein operates within protein modification; protein lipoylation via exogenous pathway; protein N(6)-(lipoyl)lysine from lipoate: step 1/2. It participates in protein modification; protein lipoylation via exogenous pathway; protein N(6)-(lipoyl)lysine from lipoate: step 2/2. Its function is as follows. Catalyzes both the ATP-dependent activation of exogenously supplied lipoate to lipoyl-AMP and the transfer of the activated lipoyl onto the lipoyl domains of lipoate-dependent enzymes. The chain is Lipoate-protein ligase A from Escherichia coli O6:H1 (strain CFT073 / ATCC 700928 / UPEC).